The primary structure comprises 96 residues: Small ribosomal subunit protein bS6 (96 aa).

This sequence belongs to the bacterial ribosomal protein bS6 family.

Its function is as follows. Binds together with bS18 to 16S ribosomal RNA. The polypeptide is Small ribosomal subunit protein bS6 (Carboxydothermus hydrogenoformans (strain ATCC BAA-161 / DSM 6008 / Z-2901)).